The primary structure comprises 174 residues: Large ribosomal subunit protein bL12cz (174 aa).

A chloroplast-targeting transit peptide spans 1-45 (MASTTFSSAFSILSLPSSSPSPPPSPPRTLPVANRRRRAAAVAST). The interval 1 to 46 (MASTTFSSAFSILSLPSSSPSPPPSPPRTLPVANRRRRAAAVASTA) is disordered. Residues 7 to 18 (SSAFSILSLPSS) show a composition bias toward low complexity. A compositionally biased stretch (pro residues) spans 19–29 (SPSPPPSPPRT).

Belongs to the bacterial ribosomal protein bL12 family.

It localises to the plastid. It is found in the chloroplast. This Secale cereale (Rye) protein is Large ribosomal subunit protein bL12cz (RPL12-1).